A 179-amino-acid chain; its full sequence is UPF0167 protein PA1536 (179 aa).

This sequence belongs to the UPF0167 family.

The chain is UPF0167 protein PA1536 from Pseudomonas aeruginosa (strain ATCC 15692 / DSM 22644 / CIP 104116 / JCM 14847 / LMG 12228 / 1C / PRS 101 / PAO1).